Here is a 361-residue protein sequence, read N- to C-terminus: Alanine racemase (361 aa).

The active-site Proton acceptor; specific for D-alanine is Lys-35. N6-(pyridoxal phosphate)lysine is present on Lys-35. Arg-132 provides a ligand contact to substrate. Tyr-257 (proton acceptor; specific for L-alanine) is an active-site residue. A substrate-binding site is contributed by Met-305.

It belongs to the alanine racemase family. Pyridoxal 5'-phosphate is required as a cofactor.

It carries out the reaction L-alanine = D-alanine. It participates in amino-acid biosynthesis; D-alanine biosynthesis; D-alanine from L-alanine: step 1/1. Functionally, catalyzes the interconversion of L-alanine and D-alanine. May also act on other amino acids. The chain is Alanine racemase (alr) from Thioalkalivibrio sulfidiphilus (strain HL-EbGR7).